We begin with the raw amino-acid sequence, 334 residues long: Glyceraldehyde-3-phosphate dehydrogenase (334 aa).

NAD(+) contacts are provided by residues 10–11, D33, K77, and T119; that span reads RI. Residues 149–151, T180, 209–210, and R232 contribute to the D-glyceraldehyde 3-phosphate site; these read SCT and TG. C150 serves as the catalytic Nucleophile. Residue N314 participates in NAD(+) binding.

It belongs to the glyceraldehyde-3-phosphate dehydrogenase family. As to quaternary structure, homotetramer.

The protein resides in the cytoplasm. It catalyses the reaction D-glyceraldehyde 3-phosphate + phosphate + NAD(+) = (2R)-3-phospho-glyceroyl phosphate + NADH + H(+). It functions in the pathway carbohydrate degradation; glycolysis; pyruvate from D-glyceraldehyde 3-phosphate: step 1/5. In terms of biological role, catalyzes the oxidative phosphorylation of glyceraldehyde 3-phosphate (G3P) to 1,3-bisphosphoglycerate (BPG) using the cofactor NAD. The first reaction step involves the formation of a hemiacetal intermediate between G3P and a cysteine residue, and this hemiacetal intermediate is then oxidized to a thioester, with concomitant reduction of NAD to NADH. The reduced NADH is then exchanged with the second NAD, and the thioester is attacked by a nucleophilic inorganic phosphate to produce BPG. In Chlamydia trachomatis serovar L2 (strain ATCC VR-902B / DSM 19102 / 434/Bu), this protein is Glyceraldehyde-3-phosphate dehydrogenase (gap).